A 427-amino-acid polypeptide reads, in one-letter code: Serine--tRNA ligase (427 aa).

235–237 (TSE) serves as a coordination point for L-serine. ATP is bound at residue 266 to 268 (RSE). Glutamate 289 provides a ligand contact to L-serine. Position 353 to 356 (353 to 356 (EISS)) interacts with ATP. Residue serine 388 coordinates L-serine.

It belongs to the class-II aminoacyl-tRNA synthetase family. Type-1 seryl-tRNA synthetase subfamily. Homodimer. The tRNA molecule binds across the dimer.

The protein resides in the cytoplasm. The catalysed reaction is tRNA(Ser) + L-serine + ATP = L-seryl-tRNA(Ser) + AMP + diphosphate + H(+). The enzyme catalyses tRNA(Sec) + L-serine + ATP = L-seryl-tRNA(Sec) + AMP + diphosphate + H(+). It participates in aminoacyl-tRNA biosynthesis; selenocysteinyl-tRNA(Sec) biosynthesis; L-seryl-tRNA(Sec) from L-serine and tRNA(Sec): step 1/1. Functionally, catalyzes the attachment of serine to tRNA(Ser). Is also able to aminoacylate tRNA(Sec) with serine, to form the misacylated tRNA L-seryl-tRNA(Sec), which will be further converted into selenocysteinyl-tRNA(Sec). The polypeptide is Serine--tRNA ligase (Chromobacterium violaceum (strain ATCC 12472 / DSM 30191 / JCM 1249 / CCUG 213 / NBRC 12614 / NCIMB 9131 / NCTC 9757 / MK)).